We begin with the raw amino-acid sequence, 652 residues long: DNA ligase (652 aa).

Residues 29–33 (DSDYD), 78–79 (SL), and E107 contribute to the NAD(+) site. K109 serves as the catalytic N6-AMP-lysine intermediate. NAD(+)-binding residues include R130, E164, K278, and K302. 4 residues coordinate Zn(2+): C395, C398, C413, and C418. In terms of domain architecture, BRCT spans 577 to 652 (NSDAALFGLT…IEDEDWLRQL (76 aa)).

The protein belongs to the NAD-dependent DNA ligase family. LigA subfamily. Mg(2+) is required as a cofactor. It depends on Mn(2+) as a cofactor.

The enzyme catalyses NAD(+) + (deoxyribonucleotide)n-3'-hydroxyl + 5'-phospho-(deoxyribonucleotide)m = (deoxyribonucleotide)n+m + AMP + beta-nicotinamide D-nucleotide.. Functionally, DNA ligase that catalyzes the formation of phosphodiester linkages between 5'-phosphoryl and 3'-hydroxyl groups in double-stranded DNA using NAD as a coenzyme and as the energy source for the reaction. It is essential for DNA replication and repair of damaged DNA. In Streptococcus pyogenes serotype M1, this protein is DNA ligase.